A 38-amino-acid chain; its full sequence is MKVRASVKKLCRNCKIVKREGVIRVICSAEPKHKQRQG.

This sequence belongs to the bacterial ribosomal protein bL36 family.

The sequence is that of Large ribosomal subunit protein bL36A from Enterobacter sp. (strain 638).